The sequence spans 894 residues: Myb-like protein K (894 aa).

The segment covering 93 to 139 has biased composition (low complexity); that stretch reads LQQQQQSPVTNVATNTPPTLQHSISSPSPNNFNNNNNANNQFLSPNS. Disordered stretches follow at residues 93-221, 299-353, 492-539, and 601-659; these read LQQQ…SASS, QVGN…QPIT, QQQQ…LEMI, and AATT…HWTS. Over residues 140–149 the composition is skewed to polar residues; it reads PQVAKSSPSQ. Low complexity predominate over residues 150 to 221; it reads NNPSTPIANT…SQSLNSSASS (72 aa). The segment covering 300 to 309 has biased composition (polar residues); sequence VGNPMQQSND. Composition is skewed to low complexity over residues 310-353 and 492-527; these read MQPQ…QPIT and QQQQQHQMHQQHQMQPQQQQQQHQMHQQSPQQPQQM. Composition is skewed to basic and acidic residues over residues 611-640 and 649-659; these read GKEEKEKKKDKKDKDKDKDKDDDDKESKKD and ASKEKTSHWTS. Positions 649 to 704 constitute an HTH myb-type domain; sequence ASKEKTSHWTSEEHNKFLEAVQQFGIKDYHAIAKFVQTRNHHQVRTHVNTYLKNQK. Positions 677–700 form a DNA-binding region, H-T-H motif; sequence YHAIAKFVQTRNHHQVRTHVNTYL. The segment at 703 to 852 is disordered; the sequence is QKKAEAATSS…EYNSGFDSNS (150 aa). Composition is skewed to low complexity over residues 710-742, 751-805, and 815-845; these read TSSTQVSTPQQQLPIVGTPQQSVGTPQQQQPPI, QQQQ…QQPQ, and PPNNENNNNINNNLENTNNNDNGNNNNNEYN.

The protein localises to the nucleus. The polypeptide is Myb-like protein K (mybK) (Dictyostelium discoideum (Social amoeba)).